The sequence spans 413 residues: 2,3-bisphosphoglycerate-independent phosphoglycerate mutase (413 aa).

Belongs to the BPG-independent phosphoglycerate mutase family. A-PGAM subfamily.

It carries out the reaction (2R)-2-phosphoglycerate = (2R)-3-phosphoglycerate. It functions in the pathway carbohydrate degradation; glycolysis; pyruvate from D-glyceraldehyde 3-phosphate: step 3/5. In terms of biological role, catalyzes the interconversion of 2-phosphoglycerate and 3-phosphoglycerate. The chain is 2,3-bisphosphoglycerate-independent phosphoglycerate mutase from Sulfolobus acidocaldarius (strain ATCC 33909 / DSM 639 / JCM 8929 / NBRC 15157 / NCIMB 11770).